The sequence spans 284 residues: D-tagatose-1,6-bisphosphate aldolase subunit GatY (284 aa).

The active-site Proton donor is D82. Residues H83 and H180 each contribute to the Zn(2+) site. Position 181 (G181) interacts with dihydroxyacetone phosphate. Residue H208 participates in Zn(2+) binding. Dihydroxyacetone phosphate-binding positions include 209-211 (GAS) and 230-233 (NVAT).

Belongs to the class II fructose-bisphosphate aldolase family. TagBP aldolase GatY subfamily. In terms of assembly, forms a complex with GatZ. The cofactor is Zn(2+).

It carries out the reaction D-tagatofuranose 1,6-bisphosphate = D-glyceraldehyde 3-phosphate + dihydroxyacetone phosphate. It participates in carbohydrate metabolism; D-tagatose 6-phosphate degradation; D-glyceraldehyde 3-phosphate and glycerone phosphate from D-tagatose 6-phosphate: step 2/2. Catalytic subunit of the tagatose-1,6-bisphosphate aldolase GatYZ, which catalyzes the reversible aldol condensation of dihydroxyacetone phosphate (DHAP or glycerone-phosphate) with glyceraldehyde 3-phosphate (G3P) to produce tagatose 1,6-bisphosphate (TBP). Requires GatZ subunit for full activity and stability. Is involved in the catabolism of galactitol. The polypeptide is D-tagatose-1,6-bisphosphate aldolase subunit GatY (Escherichia coli O6:K15:H31 (strain 536 / UPEC)).